The sequence spans 343 residues: Proto-oncogene serine/threonine-protein kinase mos (343 aa).

A Protein kinase domain is found at 63-339 (VCLMHRLGSG…LLQRDLKAFR (277 aa)). ATP is bound by residues 69 to 77 (LGSGGFGSV) and Lys-90. Asp-198 acts as the Proton acceptor in catalysis.

This sequence belongs to the protein kinase superfamily. Ser/Thr protein kinase family. As to quaternary structure, interacts with MAP2K1/MEK1.

The protein localises to the cytoplasm. The enzyme catalyses L-seryl-[protein] + ATP = O-phospho-L-seryl-[protein] + ADP + H(+). The catalysed reaction is L-threonyl-[protein] + ATP = O-phospho-L-threonyl-[protein] + ADP + H(+). Serine/threonine kinase involved in the regulation of MAPK signaling. Is an activator of the ERK1/2 signaling cascade playing an essential role in the stimulation of oocyte maturation. The sequence is that of Proto-oncogene serine/threonine-protein kinase mos from Mus musculus (Mouse).